The following is a 210-amino-acid chain: Ribosomal RNA large subunit methyltransferase E (210 aa).

5 residues coordinate S-adenosyl-L-methionine: glycine 60, tryptophan 62, aspartate 85, aspartate 101, and aspartate 126. The active-site Proton acceptor is the lysine 166.

It belongs to the class I-like SAM-binding methyltransferase superfamily. RNA methyltransferase RlmE family.

It localises to the cytoplasm. It catalyses the reaction uridine(2552) in 23S rRNA + S-adenosyl-L-methionine = 2'-O-methyluridine(2552) in 23S rRNA + S-adenosyl-L-homocysteine + H(+). Functionally, specifically methylates the uridine in position 2552 of 23S rRNA at the 2'-O position of the ribose in the fully assembled 50S ribosomal subunit. This Bordetella pertussis (strain Tohama I / ATCC BAA-589 / NCTC 13251) protein is Ribosomal RNA large subunit methyltransferase E.